The chain runs to 5430 residues: Microtubule-actin cross-linking factor 1 (5430 aa).

The segment at 1–47 (MSSSDEETLSERSCRSERSCRSERSYRSERSGSLSPCPPGDTLPWNL) is disordered. The tract at residues 1–295 (MSSSDEETLS…VITYVSSIYD (295 aa)) is actin-binding. A Phosphoserine modification is found at S4. Residues 9–30 (LSERSCRSERSCRSERSYRSER) are compositionally biased toward basic and acidic residues. Residues S35 and S57 each carry the phosphoserine modification. Calponin-homology (CH) domains follow at residues 78–181 (RVQK…LHFQ) and 194–298 (MSAK…DAFP). 2 LRR repeats span residues 148–171 (QRQV…LTLG) and 240–264 (LVDM…VAER). S280 is modified (phosphoserine). LRR repeat units lie at residues 377 to 399 (LYKL…YHPN) and 441 to 464 (LNCE…LESG). The SH3 domain maps to 868-925 (KSTLSVKAICDYRQIEITICKNDECVLEDNSQRTKWKVISPTGNEAMVPSVCLLIPPP). One copy of the LRR 5 repeat lies at 1050–1073 (ISELKNIRLRLEECEQRLLKQIQS). S1122 is subject to Phosphoserine. LRR repeat units lie at residues 1128–1154 (ATTL…VCLN), 1187–1210 (PADL…VKDK), and 1257–1282 (HRVI…DYRA). 2 positions are modified to phosphoserine: S1367 and S1376. 2 LRR repeats span residues 1579–1602 (QQEL…IQNH) and 1629–1653 (LTAL…TREA). 2 Spectrin repeats span residues 1816-1891 (ELQK…NFEE) and 1933-2041 (QYQQ…ALLQ). S1860 is subject to Phosphoserine. The stretch at 1869-1891 (KGDLRFVTISGQKVLETENNFEE) is one LRR 11 repeat. 2 LRR repeats span residues 2058-2083 (LQSM…LIQE) and 2194-2220 (IQEL…ALGS). The stretch at 2399 to 2507 (RMEEVQKEAS…TVARQKQLEE (109 aa)) is one Spectrin 3 repeat. Phosphoserine is present on residues S2429 and S2454. LRR repeat units lie at residues 2444–2467 (KAFL…LAGL), 2534–2557 (GVLG…QFML), and 2702–2725 (KKRL…RMNR). Spectrin repeat units follow at residues 2733–2837 (TQQF…SRLK) and 2842–2945 (KAQK…SLEE). A phosphoserine mark is found at S2769 and S2895. 3 LRR repeats span residues 2984 to 3009 (NKNL…YLRD), 3105 to 3127 (NKIQ…MLEE), and 3214 to 3237 (KEQV…LIQS). Spectrin repeat units lie at residues 3169 to 3274 (EDFY…QLQE), 3281 to 3383 (KFQD…QLED), 3388 to 3491 (AKQF…SLLE), 3714 to 3818 (RSQQ…ARLE), 3825 to 3927 (NQFW…ALDE), 4047 to 4152 (LAEK…KLED), 4157 to 4261 (AVQY…HKLE), 4267 to 4370 (LGQF…QQLQ), 4375 to 4481 (QAQG…KLEE), 4486 to 4589 (ATEF…RSLD), 4594 to 4700 (RAKQ…KLEE), 4707 to 4808 (QFMD…RLEQ), and 4812 to 4916 (QAEE…QRLE). T3368 is subject to Phosphothreonine. 2 LRR repeats span residues 3737-3761 (MALG…AFSI) and 3846-3870 (AQLP…QLRE). Position 4074 is a phosphoserine (S4074). Position 4252 is an N6-acetyllysine (K4252). One copy of the LRR 22 repeat lies at 4538–4561 (RDQIIELDQTGNQLKFLSQKQDVV). A disordered region spans residues 4993 to 5023 (PTHAPFIEKSRSGSRKSLNQPTPPPMPILSQ). Residue S5009 is modified to Phosphoserine. EF-hand domains are found at residues 5083–5118 (HKKS…SKFP) and 5119–5154 (TTKL…NKDA). 10 residues coordinate Ca(2+): D5096, D5098, D5100, K5102, E5107, D5132, D5134, D5136, Y5138, and E5143. Residues 5159–5231 (TDADKIEDEV…EFLVKNDPCR (73 aa)) form the GAR domain. The tract at residues 5159–5430 (TDADKIEDEV…ASPRTPCPKR (272 aa)) is C-terminal tail. The interval 5247 to 5430 (PEGASQGMTP…ASPRTPCPKR (184 aa)) is disordered. Over residues 5267–5301 (SSRAASPTRSSSSASQSNHSCTSMPSSPATPASGT) the composition is skewed to low complexity. Position 5296 is a phosphothreonine (T5296). A compositionally biased stretch (polar residues) spans 5317 to 5341 (TFHSSRTSLAGDTSNSSSPASTGAK). 2 positions are modified to phosphoserine: S5321 and S5334. Over residues 5352–5366 (SRPGSRAGSRAGSRA) the composition is skewed to low complexity. Residues 5355–5370 (GSRAGSRAGSRASSRR) are 4 X 4 AA tandem repeats of [GS]-S-R-[AR]. A phosphoserine mark is found at S5372 and S5375. Positions 5381–5391 (ETQSACSDTSE) are enriched in polar residues. Over residues 5392–5403 (SSAAGGQGSSRR) the composition is skewed to low complexity.

This sequence belongs to the plakin or cytolinker family. Interacts with MAPRE1, CLASP1, CLASP2 and GOLGA4. Interacts with AXIN1 and LRP6. Found in a complex composed of MACF1, APC; AXIN1, CTNNB1 and GSK3B. Interacts with CAMSAP3. Phosphorylated on serine residues in the C-terminal tail by GSK3B. Phosphorylation inhibits microtubule-binding and this plays a critical role in bulge stem cell migration and skin wound repair. Wnt-signaling can repress phosphorylation.

The protein localises to the cytoplasm. It is found in the cytoskeleton. It localises to the golgi apparatus. Its subcellular location is the cell membrane. The protein resides in the cell projection. The protein localises to the ruffle membrane. It is found in the membrane. Functionally, F-actin-binding protein which plays a role in cross-linking actin to other cytoskeletal proteins and also binds to microtubules. Plays an important role in ERBB2-dependent stabilization of microtubules at the cell cortex. Acts as a positive regulator of Wnt receptor signaling pathway and is involved in the translocation of AXIN1 and its associated complex (composed of APC, CTNNB1 and GSK3B) from the cytoplasm to the cell membrane. Has actin-regulated ATPase activity and is essential for controlling focal adhesions (FAs) assembly and dynamics. Interaction with CAMSAP3 at the minus ends of non-centrosomal microtubules tethers microtubules minus-ends to actin filaments, regulating focal adhesion size and cell migration. May play role in delivery of transport vesicles containing GPI-linked proteins from the trans-Golgi network through its interaction with GOLGA4. Plays a key role in wound healing and epidermal cell migration. Required for efficient upward migration of bulge cells in response to wounding and this function is primarily rooted in its ability to coordinate microtubule dynamics and polarize hair follicle stem cells. As a regulator of actin and microtubule arrangement and stabilization, it plays an essential role in neurite outgrowth, branching and spine formation during brain development. The protein is Microtubule-actin cross-linking factor 1 of Rattus norvegicus (Rat).